The following is a 333-amino-acid chain: Ketol-acid reductoisomerase (NADP(+)) (333 aa).

Positions methionine 1–threonine 181 constitute a KARI N-terminal Rossmann domain. Residues tyrosine 24–glutamine 27, arginine 47, and aspartate 82–glutamine 85 contribute to the NADP(+) site. Histidine 107 is an active-site residue. An NADP(+)-binding site is contributed by glycine 133. The 146-residue stretch at threonine 182–leucine 327 folds into the KARI C-terminal knotted domain. Aspartate 190, glutamate 194, glutamate 226, and glutamate 230 together coordinate Mg(2+). Serine 251 lines the substrate pocket.

It belongs to the ketol-acid reductoisomerase family. Mg(2+) is required as a cofactor.

The catalysed reaction is (2R)-2,3-dihydroxy-3-methylbutanoate + NADP(+) = (2S)-2-acetolactate + NADPH + H(+). It carries out the reaction (2R,3R)-2,3-dihydroxy-3-methylpentanoate + NADP(+) = (S)-2-ethyl-2-hydroxy-3-oxobutanoate + NADPH + H(+). The protein operates within amino-acid biosynthesis; L-isoleucine biosynthesis; L-isoleucine from 2-oxobutanoate: step 2/4. Its pathway is amino-acid biosynthesis; L-valine biosynthesis; L-valine from pyruvate: step 2/4. Its function is as follows. Involved in the biosynthesis of branched-chain amino acids (BCAA). Catalyzes an alkyl-migration followed by a ketol-acid reduction of (S)-2-acetolactate (S2AL) to yield (R)-2,3-dihydroxy-isovalerate. In the isomerase reaction, S2AL is rearranged via a Mg-dependent methyl migration to produce 3-hydroxy-3-methyl-2-ketobutyrate (HMKB). In the reductase reaction, this 2-ketoacid undergoes a metal-dependent reduction by NADPH to yield (R)-2,3-dihydroxy-isovalerate. The chain is Ketol-acid reductoisomerase (NADP(+)) from Desulfovibrio desulfuricans (strain ATCC 27774 / DSM 6949 / MB).